A 664-amino-acid polypeptide reads, in one-letter code: Intraflagellar transport protein 70B (664 aa).

TPR repeat units lie at residues 11–44 (DGEFTAVVYRLIRDSRYSEAVQLLSAELQGSPRS), 45–78 (RAGLSLLAYCYYRLQEFELAAECYEQLSQMHPEL), 153–186 (YDGQINLGCLLYKEGHYEAACSKFLAALQASGYQ), 188–220 (DISYNLALAYYSSRQYAPALKHIADIIERGIRQ), 385–418 (LTEQLRRLTIQVQDARHSRDDESAKKAVNDYDET), 423–456 (IPVLMAQAKIYWNLENYPMVEKIFRKSVEFCNDH), and 458–491 (VWKLNVAHVLFMQENKYKEAIGFYEPIVKKNYDN). Residues 507–534 (YIMTSQNEEAEELMRKIEKEEEQLSYDD) are a coiled coil. The TPR 8 repeat unit spans residues 543-576 (CIVNLVIGTLYCAKGNYDFGISRVIKSLEPYHKK).

Belongs to the TTC30/dfy-1/fleer family. Interacts with the IFT B complex components IFT27, IFT46, IFT74, IFT52, IFT57, IFT80, IFT81 and IFT88. Interacts with KIF17.

It is found in the cell projection. It localises to the cilium. In terms of biological role, required for polyglutamylation of axonemal tubulin. Plays a role in anterograde intraflagellar transport (IFT), the process by which cilia precursors are transported from the base of the cilium to the site of their incorporation at the tip. This chain is Intraflagellar transport protein 70B (Ift70b), found in Rattus norvegicus (Rat).